A 66-amino-acid polypeptide reads, in one-letter code: Large ribosomal subunit protein bL33 (66 aa).

Belongs to the bacterial ribosomal protein bL33 family.

The protein is Large ribosomal subunit protein bL33 of Synechococcus sp. (strain CC9902).